The following is a 99-amino-acid chain: Cystatin (99 aa).

The 97-residue stretch at 3–99 (GGLSPRSVSD…EEKLCGFQVW (97 aa)) folds into the Cystatin domain. The Secondary area of contact motif lies at 47–51 (QSVAG). The cysteines at positions 65 and 81 are disulfide-linked.

Belongs to the cystatin family. Expressed by the venom gland.

Its subcellular location is the secreted. In terms of biological role, inhibits various C1 cysteine proteases including cathepsin L (Ki is 0.1 nM), papain (Ki is 0.19 nM), cathepsin S (Ki is 1.2 nM), and cathepsin B (Ki is 2.5 nM). This protein has no toxic activity and its function in the venom is unknown. It may play a role as housekeeping or regulatory protein. This chain is Cystatin, found in Naja atra (Chinese cobra).